The chain runs to 245 residues: tRNA (guanine-N(1)-)-methyltransferase (245 aa).

Residues glycine 114 and 134–139 contribute to the S-adenosyl-L-methionine site; that span reads IGDYIL.

Belongs to the RNA methyltransferase TrmD family. As to quaternary structure, homodimer.

The protein resides in the cytoplasm. It carries out the reaction guanosine(37) in tRNA + S-adenosyl-L-methionine = N(1)-methylguanosine(37) in tRNA + S-adenosyl-L-homocysteine + H(+). In terms of biological role, specifically methylates guanosine-37 in various tRNAs. The sequence is that of tRNA (guanine-N(1)-)-methyltransferase from Listeria welshimeri serovar 6b (strain ATCC 35897 / DSM 20650 / CCUG 15529 / CIP 8149 / NCTC 11857 / SLCC 5334 / V8).